The following is a 537-amino-acid chain: Hexahomomethionine N-hydroxylase (537 aa).

Residues 7–27 (FNTCFQILLGFIVFIASITLL) traverse the membrane as a helical segment.

The protein belongs to the cytochrome P450 family. Heme serves as cofactor. As to expression, highly expressed in hypocotyl and roots. Lower expression in siliques, stems and leaves. Barely detectable in flowers. Expressed only in the vascular bundles in apical plant parts.

It localises to the endoplasmic reticulum membrane. The enzyme catalyses L-hexahomomethionine + 2 reduced [NADPH--hemoprotein reductase] + 2 O2 = (E)-9-(methylsulfanyl)nonanal oxime + 2 oxidized [NADPH--hemoprotein reductase] + CO2 + 3 H2O + 2 H(+). It carries out the reaction L-pentahomomethionine + 2 reduced [NADPH--hemoprotein reductase] + 2 O2 = (E)-8-(methylsulfanyl)octanal oxime + 2 oxidized [NADPH--hemoprotein reductase] + CO2 + 3 H2O + 2 H(+). It catalyses the reaction an L-polyhomomethionine + 2 reduced [NADPH--hemoprotein reductase] + 2 O2 = an (E)-omega-(methylsulfanyl)-alkanal oxime + 2 oxidized [NADPH--hemoprotein reductase] + CO2 + 3 H2O + 2 H(+). In terms of biological role, catalyzes the conversion of the long chain elongated methionines penta- and hexahomomethionine to their corresponding aldoximes 8-methylthiooctanaldoxime and 9-methylthiononanaldoxime. This chain is Hexahomomethionine N-hydroxylase (CYP79F2), found in Arabidopsis thaliana (Mouse-ear cress).